Here is a 569-residue protein sequence, read N- to C-terminus: Beta-galactoside-specific lectin 3 (569 aa).

Residues methionine 1–serine 33 form the signal peptide. The active site involves glutamate 198. 3 disulfides stabilise this stretch: cysteine 280/cysteine 311, cysteine 327/cysteine 346, and cysteine 370/cysteine 387. The propeptide at glutamate 288 to aspartate 307 is connecting peptide. A Ricin B-type lectin 1 domain is found at serine 314 to glycine 441. A D-galactose-binding site is contributed by aspartate 329–arginine 331. N-linked (GlcNAc...) asparagine glycosylation is found at asparagine 402 and asparagine 442. In terms of domain architecture, Ricin B-type lectin 2 spans alanine 445–valine 568. 2 cysteine pairs are disulfide-bonded: cysteine 458–cysteine 471 and cysteine 497–cysteine 514. Aspartate 541–alanine 543 is a binding site for D-galactose.

Belongs to the ribosome-inactivating protein family. Type 2 RIP subfamily. In terms of assembly, disulfide-linked dimer of A and B chains.

The enzyme catalyses Endohydrolysis of the N-glycosidic bond at one specific adenosine on the 28S rRNA.. In terms of biological role, the A chain is responsible for inhibiting protein synthesis through the catalytic inactivation of 60S ribosomal subunits by removing adenine from position 4,324 of 28S rRNA. The B chain binds to cell receptors and probably facilitates the entry into the cell of the A chain; B chains are also responsible for cell agglutination (lectin activity). Inhibits growth of the human tumor cell line Molt4. In Viscum album (European mistletoe), this protein is Beta-galactoside-specific lectin 3.